Reading from the N-terminus, the 367-residue chain is ELAV-like protein 3 (367 aa).

3 RRM domains span residues 39 to 117 (TNLI…YARP), 125 to 205 (ANLY…FANN), and 284 to 362 (WCIF…FKTS).

Belongs to the RRM elav family. As to quaternary structure, interacts with MAP1B light chain LC1. Brain specific.

RNA-binding protein that binds to AU-rich element (ARE) sequences of target mRNAs, including VEGF mRNA. May also bind poly-A tracts via RRM 3. May be involved in neuronal differentiation and maintenance. Plays a role in the stabilization of GAP43 mRNA and in spatial learning. This chain is ELAV-like protein 3 (ELAVL3), found in Homo sapiens (Human).